The chain runs to 106 residues: Large ribosomal subunit protein eL42 (106 aa).

A disordered region spans residues 34–53 (YAQGKRRYDRKQSGYGGQTK).

Belongs to the eukaryotic ribosomal protein eL42 family. In terms of assembly, component of the large ribosomal subunit.

It localises to the cytoplasm. In terms of biological role, component of the large ribosomal subunit. The ribosome is a large ribonucleoprotein complex responsible for the synthesis of proteins in the cell. The protein is Large ribosomal subunit protein eL42 (Rpl36a) of Canis lupus familiaris (Dog).